We begin with the raw amino-acid sequence, 502 residues long: Glycerol kinase (502 aa).

Thr14 provides a ligand contact to ADP. Residues Thr14, Thr15, and Ser16 each coordinate ATP. Thr14 contributes to the sn-glycerol 3-phosphate binding site. Position 18 (Arg18) interacts with ADP. Sn-glycerol 3-phosphate-binding residues include Arg84, Glu85, and Tyr136. Residues Arg84, Glu85, and Tyr136 each contribute to the glycerol site. Residue His232 is modified to Phosphohistidine; by HPr. Asp246 lines the sn-glycerol 3-phosphate pocket. Residues Asp246 and Gln247 each coordinate glycerol. ADP-binding residues include Thr268 and Gly311. Residues Thr268, Gly311, Gln315, and Gly412 each coordinate ATP. ADP is bound by residues Gly412 and Asn416.

This sequence belongs to the FGGY kinase family. In terms of assembly, homotetramer and homodimer (in equilibrium). In terms of processing, the phosphoenolpyruvate-dependent sugar phosphotransferase system (PTS), including enzyme I, and histidine-containing protein (HPr) are required for the phosphorylation, which leads to the activation of the enzyme.

It carries out the reaction glycerol + ATP = sn-glycerol 3-phosphate + ADP + H(+). Its pathway is polyol metabolism; glycerol degradation via glycerol kinase pathway; sn-glycerol 3-phosphate from glycerol: step 1/1. Its activity is regulated as follows. Activated by phosphorylation and inhibited by fructose 1,6-bisphosphate (FBP). Functionally, key enzyme in the regulation of glycerol uptake and metabolism. Catalyzes the phosphorylation of glycerol to yield sn-glycerol 3-phosphate. The protein is Glycerol kinase of Streptococcus pneumoniae (strain ATCC 700669 / Spain 23F-1).